Here is a 259-residue protein sequence, read N- to C-terminus: Thiazole synthase (259 aa).

The active-site Schiff-base intermediate with DXP is K99. Residues G161, A187–G188, and N209–T210 contribute to the 1-deoxy-D-xylulose 5-phosphate site.

Belongs to the ThiG family. Homotetramer. Forms heterodimers with either ThiH or ThiS.

Its subcellular location is the cytoplasm. It catalyses the reaction [ThiS sulfur-carrier protein]-C-terminal-Gly-aminoethanethioate + 2-iminoacetate + 1-deoxy-D-xylulose 5-phosphate = [ThiS sulfur-carrier protein]-C-terminal Gly-Gly + 2-[(2R,5Z)-2-carboxy-4-methylthiazol-5(2H)-ylidene]ethyl phosphate + 2 H2O + H(+). It participates in cofactor biosynthesis; thiamine diphosphate biosynthesis. Catalyzes the rearrangement of 1-deoxy-D-xylulose 5-phosphate (DXP) to produce the thiazole phosphate moiety of thiamine. Sulfur is provided by the thiocarboxylate moiety of the carrier protein ThiS. In vitro, sulfur can be provided by H(2)S. This is Thiazole synthase from Nautilia profundicola (strain ATCC BAA-1463 / DSM 18972 / AmH).